Reading from the N-terminus, the 404-residue chain is Acetate kinase (404 aa).

Asn-7 is a binding site for Mg(2+). Lys-14 contacts ATP. Arg-91 contacts substrate. The active-site Proton donor/acceptor is Asp-148. ATP-binding positions include 208–212 (HLGNG) and 283–285 (DLR). Residue Glu-388 participates in Mg(2+) binding.

It belongs to the acetokinase family. In terms of assembly, homodimer. Mg(2+) is required as a cofactor. Requires Mn(2+) as cofactor.

The protein resides in the cytoplasm. The catalysed reaction is acetate + ATP = acetyl phosphate + ADP. It participates in metabolic intermediate biosynthesis; acetyl-CoA biosynthesis; acetyl-CoA from acetate: step 1/2. Catalyzes the formation of acetyl phosphate from acetate and ATP. Can also catalyze the reverse reaction. This Borrelia turicatae (strain 91E135) protein is Acetate kinase.